The sequence spans 390 residues: Formate-dependent phosphoribosylglycinamide formyltransferase (390 aa).

Residues 18-19 and glutamate 78 each bind N(1)-(5-phospho-beta-D-ribosyl)glycinamide; that span reads EL. ATP-binding positions include arginine 110, lysine 151, 156 to 161, 191 to 194, and glutamate 199; these read SSGKGQ and EEFL. An ATP-grasp domain is found at 115–305; it reads DLASKELNIK…EFELHLRAFL (191 aa). Glutamate 264 and glutamate 276 together coordinate Mg(2+). Residues aspartate 283, lysine 353, and 360–361 contribute to the N(1)-(5-phospho-beta-D-ribosyl)glycinamide site; that span reads RR.

The protein belongs to the PurK/PurT family. Homodimer.

The enzyme catalyses N(1)-(5-phospho-beta-D-ribosyl)glycinamide + formate + ATP = N(2)-formyl-N(1)-(5-phospho-beta-D-ribosyl)glycinamide + ADP + phosphate + H(+). It participates in purine metabolism; IMP biosynthesis via de novo pathway; N(2)-formyl-N(1)-(5-phospho-D-ribosyl)glycinamide from N(1)-(5-phospho-D-ribosyl)glycinamide (formate route): step 1/1. In terms of biological role, involved in the de novo purine biosynthesis. Catalyzes the transfer of formate to 5-phospho-ribosyl-glycinamide (GAR), producing 5-phospho-ribosyl-N-formylglycinamide (FGAR). Formate is provided by PurU via hydrolysis of 10-formyl-tetrahydrofolate. In Prochlorococcus marinus subsp. pastoris (strain CCMP1986 / NIES-2087 / MED4), this protein is Formate-dependent phosphoribosylglycinamide formyltransferase.